The following is a 280-amino-acid chain: Nocamycin O-methyltransferase (280 aa).

Belongs to the methyltransferase superfamily.

It catalyses the reaction nocamycin E + S-adenosyl-L-methionine = nocamycin I + S-adenosyl-L-homocysteine. It participates in antibiotic biosynthesis. In terms of biological role, involved in the biosynthesis of nocamycin I and nocamycin II. Catalyzes the methylation of nocamycin E to yield nocamycin I. The polypeptide is Nocamycin O-methyltransferase (Saccharothrix syringae (Nocardiopsis syringae)).